The chain runs to 430 residues: Histidine--tRNA ligase (430 aa).

Belongs to the class-II aminoacyl-tRNA synthetase family. In terms of assembly, homodimer.

It localises to the cytoplasm. It catalyses the reaction tRNA(His) + L-histidine + ATP = L-histidyl-tRNA(His) + AMP + diphosphate + H(+). The chain is Histidine--tRNA ligase from Chlorobium luteolum (strain DSM 273 / BCRC 81028 / 2530) (Pelodictyon luteolum).